Reading from the N-terminus, the 178-residue chain is ATP synthase subunit b (178 aa).

The chain crosses the membrane as a helical span at residues 11-31 (IIPEPVEIVVGLVAFLLLLFV).

This sequence belongs to the ATPase B chain family. In terms of assembly, F-type ATPases have 2 components, F(1) - the catalytic core - and F(0) - the membrane proton channel. F(1) has five subunits: alpha(3), beta(3), gamma(1), delta(1), epsilon(1). F(0) has three main subunits: a(1), b(2) and c(10-14). The alpha and beta chains form an alternating ring which encloses part of the gamma chain. F(1) is attached to F(0) by a central stalk formed by the gamma and epsilon chains, while a peripheral stalk is formed by the delta and b chains.

The protein localises to the cell membrane. Its function is as follows. F(1)F(0) ATP synthase produces ATP from ADP in the presence of a proton or sodium gradient. F-type ATPases consist of two structural domains, F(1) containing the extramembraneous catalytic core and F(0) containing the membrane proton channel, linked together by a central stalk and a peripheral stalk. During catalysis, ATP synthesis in the catalytic domain of F(1) is coupled via a rotary mechanism of the central stalk subunits to proton translocation. Functionally, component of the F(0) channel, it forms part of the peripheral stalk, linking F(1) to F(0). This is ATP synthase subunit b from Saccharopolyspora erythraea (strain ATCC 11635 / DSM 40517 / JCM 4748 / NBRC 13426 / NCIMB 8594 / NRRL 2338).